The following is a 253-amino-acid chain: 3-dehydroquinate dehydratase (253 aa).

Residues 46–48 (EFR) and arginine 82 contribute to the 3-dehydroquinate site. Catalysis depends on histidine 143, which acts as the Proton donor/acceptor. Lysine 170 (schiff-base intermediate with substrate) is an active-site residue. 3 residues coordinate 3-dehydroquinate: arginine 213, serine 232, and glutamine 236.

The protein belongs to the type-I 3-dehydroquinase family. As to quaternary structure, homodimer.

It catalyses the reaction 3-dehydroquinate = 3-dehydroshikimate + H2O. Its pathway is metabolic intermediate biosynthesis; chorismate biosynthesis; chorismate from D-erythrose 4-phosphate and phosphoenolpyruvate: step 3/7. Involved in the third step of the chorismate pathway, which leads to the biosynthesis of aromatic amino acids. Catalyzes the cis-dehydration of 3-dehydroquinate (DHQ) and introduces the first double bond of the aromatic ring to yield 3-dehydroshikimate. This Clostridium novyi (strain NT) protein is 3-dehydroquinate dehydratase.